A 189-amino-acid polypeptide reads, in one-letter code: T cell receptor gamma constant 2 (189 aa).

The Ig-like domain occupies 10–104; the sequence is PKPTIFLPSI…NKNGIDQEII (95 aa). Cys-32 and Cys-88 form a disulfide bridge. Residues Asn-66, Asn-120, Asn-136, Asn-142, and Asn-151 are each glycosylated (N-linked (GlcNAc...) asparagine). Residues 155–177 form a helical membrane-spanning segment; that stretch reads YYTYLLLLLKSVVYFAIITCCLL.

As to quaternary structure, gamma-delta TR is a heterodimer composed of a gamma and delta chain; disulfide-linked. The gamma-delta TR is associated with the transmembrane signaling CD3 coreceptor proteins following the stoichiometry: a single gamma-delta TR heterodimer associates with one CD3D-CD3E heterodimer, one CD3G-CD3E heterodimer and one CD247 homodimer forming a stable octameric structure. Upon activation, gamma-delta TR complex associates with FCER1G to initiate intracellular signaling.

The protein resides in the cell membrane. Constant region of T cell receptor (TR) gamma chain that participates in the antigen recognition. Gamma-delta TRs recognize a variety of self and foreign non-peptide antigens frequently expressed at the epithelial boundaries between the host and external environment, including endogenous lipids presented by MH-like protein CD1D and phosphoantigens presented by butyrophilin-like molecule BTN3A1. Upon antigen recognition induces rapid, innate-like immune responses involved in pathogen clearance and tissue repair. Binding of gamma-delta TR complex to antigen triggers phosphorylation of immunoreceptor tyrosine-based activation motifs (ITAMs) in the CD3 chains by the LCK and FYN kinases, allowing the recruitment, phosphorylation, and activation of ZAP70 that facilitates phosphorylation of the scaffolding proteins LCP2 and LAT. This lead to the formation of a supramolecular signalosome that recruits the phospholipase PLCG1, resulting in calcium mobilization and ERK activation, ultimately leading to T cell expansion and differentiation into effector cells. Gamma-delta TRs are produced through somatic rearrangement of a limited repertoire of variable (V), diversity (D), and joining (J) genes. The potential diversity of gamma-delta TRs is conferred by the unique ability to rearrange (D) genes in tandem and to utilize all three reading frames. The combinatorial diversity is considerably increased by the sequence exonuclease trimming and random nucleotide (N) region additions which occur during the V-(D)-J rearrangements. The polypeptide is T cell receptor gamma constant 2 (Homo sapiens (Human)).